The primary structure comprises 173 residues: ATP synthase subunit b (173 aa).

Residues 15-35 (LYVGDMLFYAILFIVLMALIA) traverse the membrane as a helical segment.

It belongs to the ATPase B chain family. In terms of assembly, F-type ATPases have 2 components, F(1) - the catalytic core - and F(0) - the membrane proton channel. F(1) has five subunits: alpha(3), beta(3), gamma(1), delta(1), epsilon(1). F(0) has three main subunits: a(1), b(2) and c(10-14). The alpha and beta chains form an alternating ring which encloses part of the gamma chain. F(1) is attached to F(0) by a central stalk formed by the gamma and epsilon chains, while a peripheral stalk is formed by the delta and b chains.

Its subcellular location is the cell membrane. Its function is as follows. F(1)F(0) ATP synthase produces ATP from ADP in the presence of a proton or sodium gradient. F-type ATPases consist of two structural domains, F(1) containing the extramembraneous catalytic core and F(0) containing the membrane proton channel, linked together by a central stalk and a peripheral stalk. During catalysis, ATP synthesis in the catalytic domain of F(1) is coupled via a rotary mechanism of the central stalk subunits to proton translocation. In terms of biological role, component of the F(0) channel, it forms part of the peripheral stalk, linking F(1) to F(0). The protein is ATP synthase subunit b of Pediococcus pentosaceus (strain ATCC 25745 / CCUG 21536 / LMG 10740 / 183-1w).